The following is a 901-amino-acid chain: Putative receptor protein kinase CRINKLY4 (901 aa).

The N-terminal stretch at 1–24 (MDHVPALVLAGCCFLALLPGWACG) is a signal peptide. The Extracellular portion of the chain corresponds to 25–423 (LGSMSSIAVS…SRKLMAFQMR (399 aa)). Tandem repeats lie at residues 33 to 68 (VSYG…GAPP), 72 to 107 (FLGL…GVPQ), 125 to 160 (LCAL…AVDE), 162 to 195 (VSTV…GVVG), 203 to 236 (FQSI…QVVP), 253 to 287 (MSTV…TSPP), and 292 to 330 (MYAL…AVPP). Positions 33–330 (VSYGEDGPVF…PLALPMAVPP (298 aa)) are 7 X 36 AA repeats. 2 N-linked (GlcNAc...) asparagine glycosylation sites follow: asparagine 151 and asparagine 179. The N-linked (GlcNAc...) asparagine glycan is linked to asparagine 282. Disulfide bonds link cysteine 338–cysteine 365, cysteine 368–cysteine 382, and cysteine 372–cysteine 390. A TNFR-Cys repeat occupies 357 to 391 (CKPANSRLCLPCSTGCPEGLYESSPCNATADRVCQ). A glycan (N-linked (GlcNAc...) asparagine) is linked at asparagine 383. A helical membrane pass occupies residues 424–444 (IFVAEIVFAVVLVLSVSVTTC). The Cytoplasmic segment spans residues 445–901 (LYVRHKLRHC…QENLYLQHNF (457 aa)). Positions 505 to 712 (FSEDSQVGKG…EILSGRKAID (208 aa)) constitute a Protein kinase domain. ATP is bound by residues 511–519 (VGKGSFSCV) and lysine 533. Catalysis depends on aspartate 634, which acts as the Proton acceptor. The tract at residues 845-876 (VTSSQRRKSSASEADIVGRRATDGRNVGSSIG) is disordered.

The protein belongs to the protein kinase superfamily. Ser/Thr protein kinase family. Homodimer.

It is found in the cell membrane. The protein localises to the endosome. Its subcellular location is the multivesicular body membrane. It carries out the reaction L-seryl-[protein] + ATP = O-phospho-L-seryl-[protein] + ADP + H(+). The catalysed reaction is L-threonyl-[protein] + ATP = O-phospho-L-threonyl-[protein] + ADP + H(+). Functionally, putative receptor protein kinase. Could play a role in a differentiation signal. The CRINKLY4 (CR4) mutation affects leaf epidermis differentiation such that cell size and morphology are altered, and surface functions are compromised, allowing graft-like fusions between organs. In Zea mays (Maize), this protein is Putative receptor protein kinase CRINKLY4 (CR4).